The following is an 816-amino-acid chain: Two pore channel protein 1 (816 aa).

The Cytoplasmic portion of the chain corresponds to 1-112 (MAVSLDDDVP…AHNHLFYLME (112 aa)). The tract at residues 17 to 64 (EGGSAPLAPSNGLGQEELPSKNGGSYAIHDSQAPSLSSGGESSPSSPA) is disordered. Residues 50-63 (PSLSSGGESSPSSP) are compositionally biased toward low complexity. The helical transmembrane segment at 113 to 133 (LATALLLLLLSLCEAPAVPAL) threads the bilayer. Position 134 (Arg-134) is a topological domain, extracellular. Residues 135 to 155 (LGIYVHATLELFALMVVVFEL) traverse the membrane as a helical segment. Residues 156–177 (CMKLRWLGLHTFIRHKRTMVKT) are Cytoplasmic-facing. The helical transmembrane segment at 178-198 (SVLVVQFVEAIVVLVRQMSHV) threads the bilayer. Residues 199-200 (RV) are Extracellular-facing. The chain crosses the membrane as a helical span at residues 201-220 (TRALRCIFLVDCRYCGGVRR). The Cytoplasmic segment spans residues 221–234 (NLRQIFQSLPPFMD). A helical membrane pass occupies residues 235–255 (ILLLLLFFMIIFAILGFYLFS). At 256 to 262 (PNPSDPY) the chain is on the extracellular side. The segment at residues 263–286 (FSTLENSIVSLFVLLTTANFPDVM) is an intramembrane region (helical; Pore-forming). The Extracellular portion of the chain corresponds to 287 to 294 (MPSYSRNP). Residues 295–315 (WSCVFFIVYLSIELYFIMNLL) traverse the membrane as a helical segment. Over 316–444 (LAVVFDTFND…NILVKSKAFQ (129 aa)) the chain is Cytoplasmic. Residues 445-465 (YFMYLVVAVNGVWILVETFML) form a helical membrane-spanning segment. At 466–479 (KGGNFFSKHVPWSY) the chain is on the extracellular side. A helical membrane pass occupies residues 480–500 (LVFLTIYGVELFLKVAGLGPV). The Cytoplasmic segment spans residues 501 to 503 (EYL). The chain crosses the membrane as a helical span at residues 504–526 (SSGWNLFDFSVTVFAFLGLLALA). Residues 527–534 (LNMEPFYF) lie on the Extracellular side of the membrane. Residues 535 to 549 (IVVLRPLQLLRLFKL) form a helical membrane-spanning segment. The Cytoplasmic portion of the chain corresponds to 550–573 (KERYRNVLDTMFELLPRMASLGLT). A helical transmembrane segment spans residues 574–594 (LLIFYYSFAIVGMEFFCGIVF). The Extracellular portion of the chain corresponds to 595-629 (PNCCNTSTVADAYRWRNHTVGNRTVVEEGYYYLNN). N-linked (GlcNAc...) asparagine glycans are attached at residues Asn-599, Asn-611, and Asn-616. Positions 630–653 (FDNILNSFVTLFELTVVNNWYIIM) form an intramembrane region, helical; Pore-forming. Topologically, residues 654-670 (EGVTSQTSHWSRLYFMT) are extracellular. A helical membrane pass occupies residues 671 to 691 (FYIVTMVVMTIIVAFILEAFV). Residues 692–816 (FRMNYSRKNQ…GSRQRSQTVT (125 aa)) lie on the Cytoplasmic side of the membrane. A coiled-coil region spans residues 769–796 (SLKMYQEEIQEWYEEHAREQEQQRQLSS). Positions 782–816 (EEHAREQEQQRQLSSSAAPAAQQPPGSRQRSQTVT) are disordered. Positions 791–816 (QRQLSSSAAPAAQQPPGSRQRSQTVT) are enriched in low complexity.

This sequence belongs to the calcium channel alpha-1 subunit (TC 1.A.1.11) family. Two pore calcium channel subfamily. As to quaternary structure, dimer. Interacts with MTOR; the interaction is required for TPCN1 ATP sensitivity. Interacts with STX7, STX8 and STX12. Interacts with JPT2. Found in a complex with LSM12, TPCN1 and TPCN2. In terms of processing, N-glycosylated. Highest expression found in the heart and kidney, and lowest expression found in the spleen.

The protein resides in the lysosome membrane. It localises to the endosome membrane. It is found in the early endosome membrane. The protein localises to the recycling endosome membrane. The enzyme catalyses Na(+)(in) = Na(+)(out). It catalyses the reaction Ca(2+)(in) = Ca(2+)(out). Na(+) current is inhibited by ATP in a MTORC-dependent manner. ATP sensitivity is independent of PI(3,5)P2. Probably regulated by Mg(2+) ions, cytosolic Mg(2+) selectively inhibits outward current while lysosomal Mg(2+) modestly inhibits both the outward and inward currents. In the absence of Mg(2+), NAADP readily activates TPCN2, with properties similar to PI(3,5)P2. Both current elicited by PI(3,5)P2 as well as NAADP are inhibited by tetrandrine. In terms of biological role, intracellular channel initially characterized as a non-selective Ca(2+)-permeable channel activated by NAADP (nicotinic acid adenine dinucleotide phosphate), it is also a voltage-gated highly-selective Na(+) channel activated directly by PI(3,5)P2 (phosphatidylinositol 3,5-bisphosphate) that senses pH changes and confers electrical excitability to organelles. Localizes to the early and recycling endosomes membranes where it plays a role in the uptake and processing of proteins and regulates organellar membrane excitability, membrane trafficking and pH homeostasis. Ion selectivity is not fixed but rather agonist-dependent and under defined ionic conditions, can be readily activated by both NAADP and PI(3,5)P2. Required for mTOR-dependent nutrient sensing. Functionally, (Microbial infection) During Ebola virus (EBOV) infection, controls the movement of endosomes containing virus particles and is required by EBOV to escape from the endosomal network into the cell cytoplasm. This Homo sapiens (Human) protein is Two pore channel protein 1.